The primary structure comprises 738 residues: Ethylene receptor (738 aa).

Transmembrane regions (helical) follow at residues 23-43, 54-74, and 89-109; these read ISDF…IYFV, VLVQ…INLW, and IAKV…VHII. Cysteine 65 and histidine 69 together coordinate Cu cation. Positions 158–307 constitute a GAF domain; the sequence is DRHTILRTTL…VVADQVAVAL (150 aa). In terms of domain architecture, Histidine kinase spans 350–589; the sequence is VMNHEMRTPM…IFIVKLGIPE (240 aa). A Phosphohistidine; by autocatalysis modification is found at histidine 353. In terms of domain architecture, Response regulatory spans 615 to 730; sequence KVLLMDDNGV…KMRSVLSDLL (116 aa). 4-aspartylphosphate is present on aspartate 663.

This sequence belongs to the ethylene receptor family. Homodimer; disulfide-linked. The cofactor is Cu cation. Activation probably requires a transfer of a phosphate group between a His in the transmitter domain and an Asp of the receiver domain. Higher expression in arils than in seeds.

The protein localises to the endoplasmic reticulum membrane. It carries out the reaction ATP + protein L-histidine = ADP + protein N-phospho-L-histidine.. May act early in the ethylene signal transduction pathway, possibly as an ethylene receptor, or as a regulator of the pathway. The chain is Ethylene receptor (ETR1) from Passiflora edulis (Passion fruit).